Reading from the N-terminus, the 906-residue chain is Protein translocase subunit SecA (906 aa).

Residues Gln87, 105–109 (GEGKT), and Asp507 each bind ATP. Zn(2+) contacts are provided by Cys890, Cys892, Cys901, and His902.

It belongs to the SecA family. Monomer and homodimer. Part of the essential Sec protein translocation apparatus which comprises SecA, SecYEG and auxiliary proteins SecDF-YajC and YidC. The cofactor is Zn(2+).

The protein localises to the cell inner membrane. Its subcellular location is the cytoplasm. The catalysed reaction is ATP + H2O + cellular proteinSide 1 = ADP + phosphate + cellular proteinSide 2.. Part of the Sec protein translocase complex. Interacts with the SecYEG preprotein conducting channel. Has a central role in coupling the hydrolysis of ATP to the transfer of proteins into and across the cell membrane, serving both as a receptor for the preprotein-SecB complex and as an ATP-driven molecular motor driving the stepwise translocation of polypeptide chains across the membrane. This is Protein translocase subunit SecA from Thiobacillus denitrificans (strain ATCC 25259 / T1).